The primary structure comprises 102 residues: MHVKKGDTVQVMSGKDKGKQGVILKAMPSKNRVVVEGVNVMKKHAKPSQANPQGGILEIEAPIHVSNVMPLDPKTGKPTRVGFKVVDGKKVRVAKSGESLDK.

The disordered stretch occupies residues 1-22; it reads MHVKKGDTVQVMSGKDKGKQGV.

This sequence belongs to the universal ribosomal protein uL24 family. Part of the 50S ribosomal subunit.

Its function is as follows. One of two assembly initiator proteins, it binds directly to the 5'-end of the 23S rRNA, where it nucleates assembly of the 50S subunit. One of the proteins that surrounds the polypeptide exit tunnel on the outside of the subunit. The protein is Large ribosomal subunit protein uL24 of Exiguobacterium sp. (strain ATCC BAA-1283 / AT1b).